Reading from the N-terminus, the 197-residue chain is Phosphoheptose isomerase (197 aa).

Residues 36–197 (MTASLMNNGK…IDCLLLGVEE (162 aa)) form the SIS domain. 51–53 (NGG) is a binding site for substrate. Residues His60 and Glu64 each coordinate Zn(2+). Residues Glu64, 93–94 (ND), 119–121 (STS), Ser124, and Gln174 each bind substrate. Gln174 and His182 together coordinate Zn(2+).

It belongs to the SIS family. GmhA subfamily. In terms of assembly, homotetramer. The cofactor is Zn(2+).

It is found in the cytoplasm. It carries out the reaction 2 D-sedoheptulose 7-phosphate = D-glycero-alpha-D-manno-heptose 7-phosphate + D-glycero-beta-D-manno-heptose 7-phosphate. It participates in carbohydrate biosynthesis; D-glycero-D-manno-heptose 7-phosphate biosynthesis; D-glycero-alpha-D-manno-heptose 7-phosphate and D-glycero-beta-D-manno-heptose 7-phosphate from sedoheptulose 7-phosphate: step 1/1. In terms of biological role, catalyzes the isomerization of sedoheptulose 7-phosphate in D-glycero-D-manno-heptose 7-phosphate. The polypeptide is Phosphoheptose isomerase (Azoarcus sp. (strain BH72)).